A 232-amino-acid chain; its full sequence is Large ribosomal subunit protein uL1 (232 aa).

The protein belongs to the universal ribosomal protein uL1 family. Part of the 50S ribosomal subunit.

Binds directly to 23S rRNA. The L1 stalk is quite mobile in the ribosome, and is involved in E site tRNA release. Its function is as follows. Protein L1 is also a translational repressor protein, it controls the translation of the L11 operon by binding to its mRNA. The polypeptide is Large ribosomal subunit protein uL1 (Cutibacterium acnes (strain DSM 16379 / KPA171202) (Propionibacterium acnes)).